The sequence spans 110 residues: uncharacterized protein (110 aa).

A signal peptide spans 1–19 (MKYLVGCLCLAAICLSAGA). N-linked (GlcNAc...) asparagine glycosylation is present at Asn101.

As to expression, component of the acid-soluble and acid-insoluble organic matrix of prismatic shell layers (at protein level).

It is found in the secreted. This is an uncharacterized protein from Haliotis asinina (Donkey's ear abalone).